A 363-amino-acid chain; its full sequence is Phosphoserine aminotransferase (363 aa).

L-glutamate contacts are provided by Ser-9 and Arg-42. Residues 76-77, Trp-102, Thr-154, Asp-174, and Gln-197 each bind pyridoxal 5'-phosphate; that span reads AR. N6-(pyridoxal phosphate)lysine is present on Lys-198. 240-241 provides a ligand contact to pyridoxal 5'-phosphate; that stretch reads NT.

Belongs to the class-V pyridoxal-phosphate-dependent aminotransferase family. SerC subfamily. In terms of assembly, homodimer. Pyridoxal 5'-phosphate serves as cofactor.

The protein resides in the cytoplasm. The catalysed reaction is O-phospho-L-serine + 2-oxoglutarate = 3-phosphooxypyruvate + L-glutamate. The enzyme catalyses 4-(phosphooxy)-L-threonine + 2-oxoglutarate = (R)-3-hydroxy-2-oxo-4-phosphooxybutanoate + L-glutamate. It functions in the pathway amino-acid biosynthesis; L-serine biosynthesis; L-serine from 3-phospho-D-glycerate: step 2/3. Its pathway is cofactor biosynthesis; pyridoxine 5'-phosphate biosynthesis; pyridoxine 5'-phosphate from D-erythrose 4-phosphate: step 3/5. Its function is as follows. Catalyzes the reversible conversion of 3-phosphohydroxypyruvate to phosphoserine and of 3-hydroxy-2-oxo-4-phosphonooxybutanoate to phosphohydroxythreonine. This is Phosphoserine aminotransferase from Baumannia cicadellinicola subsp. Homalodisca coagulata.